We begin with the raw amino-acid sequence, 328 residues long: tRNA uridine(34) hydroxylase (328 aa).

In terms of domain architecture, Rhodanese spans 122-218 (QENRCLVLDV…YGLKMGTGKW (97 aa)). C178 serves as the catalytic Cysteine persulfide intermediate.

This sequence belongs to the TrhO family.

The catalysed reaction is uridine(34) in tRNA + AH2 + O2 = 5-hydroxyuridine(34) in tRNA + A + H2O. In terms of biological role, catalyzes oxygen-dependent 5-hydroxyuridine (ho5U) modification at position 34 in tRNAs. The protein is tRNA uridine(34) hydroxylase of Chlamydia muridarum (strain MoPn / Nigg).